The sequence spans 380 residues: Glycogenin-2 (380 aa).

3 residues coordinate UDP: leucine 10, tyrosine 16, and arginine 95. 12 residues coordinate UDP-alpha-D-glucose: leucine 10, tyrosine 16, arginine 95, lysine 104, aspartate 120, alanine 121, aspartate 122, asparagine 158, threonine 159, aspartate 185, aspartate 188, and glutamine 189. Positions 120, 121, and 122 each coordinate UDP. Aspartate 120 serves as a coordination point for Mn(2+). A Mn(2+)-binding site is contributed by aspartate 122. Residues tyrosine 230 and tyrosine 232 are each glycosylated (O-linked (Glc...) tyrosine). Residues histidine 249, glycine 252, and lysine 255 each coordinate UDP. Residue histidine 249 participates in Mn(2+) binding. 2 residues coordinate UDP-alpha-D-glucose: glycine 252 and lysine 255. A disordered region spans residues 331-357; sequence SVDRNASQKSTAEKHDIEKPTSKPQSA. Residues 341–351 are compositionally biased toward basic and acidic residues; sequence TAEKHDIEKPT. The O-linked (Glc...) tyrosine glycan is linked to tyrosine 367.

The protein belongs to the glycosyltransferase 8 family. Glycogenin subfamily. In terms of assembly, interacts with glycogen synthase GSY2. Mn(2+) serves as cofactor.

Its subcellular location is the cytoplasm. The protein resides in the vacuole. It catalyses the reaction L-tyrosyl-[glycogenin] + UDP-alpha-D-glucose = alpha-D-glucosyl-L-tyrosyl-[glycogenin] + UDP + H(+). The catalysed reaction is [1,4-alpha-D-glucosyl](n)-L-tyrosyl-[glycogenin] + UDP-alpha-D-glucose = [1,4-alpha-D-glucosyl](n+1)-L-tyrosyl-[glycogenin] + UDP + H(+). In terms of biological role, self-glucosylating initiator of glycogen synthesis. It catalyzes the formation of a short alpha (1,4)-glucosyl chain covalently attached via a glucose 1-O-tyrosyl linkage to internal tyrosine residues and these chains act as primers for the elongation reaction catalyzed by glycogen synthase. Capable of transferring glucosyl residues to unbound acceptors such as free oligoglucans or oligoglucan derivatives. The protein is Glycogenin-2 (GLG2) of Saccharomyces cerevisiae (strain YJM789) (Baker's yeast).